The primary structure comprises 318 residues: Ribose-phosphate pyrophosphokinase 1 (318 aa).

96–101 (RQDKKD) contacts ATP. The Mg(2+) site is built by Asp-128, His-130, Asp-139, and Asp-143. An ATP-binding site is contributed by His-130. A binding of phosphoribosylpyrophosphate region spans residues 212–227 (KDRVAILVDDMADTCG).

It belongs to the ribose-phosphate pyrophosphokinase family. As to quaternary structure, homodimer. The active form is probably a hexamer composed of 3 homodimers. Mg(2+) serves as cofactor.

It carries out the reaction D-ribose 5-phosphate + ATP = 5-phospho-alpha-D-ribose 1-diphosphate + AMP + H(+). The protein operates within metabolic intermediate biosynthesis; 5-phospho-alpha-D-ribose 1-diphosphate biosynthesis; 5-phospho-alpha-D-ribose 1-diphosphate from D-ribose 5-phosphate (route I): step 1/1. Its activity is regulated as follows. Activated by magnesium and inorganic phosphate. In terms of biological role, catalyzes the synthesis of phosphoribosylpyrophosphate (PRPP) that is essential for nucleotide synthesis. This is Ribose-phosphate pyrophosphokinase 1 (PRPS1) from Macaca fascicularis (Crab-eating macaque).